The primary structure comprises 201 residues: Adenylyl-sulfate kinase (201 aa).

Residue 35-42 (GLSGSGKS) coordinates ATP. The active-site Phosphoserine intermediate is Ser-109.

This sequence belongs to the APS kinase family.

The catalysed reaction is adenosine 5'-phosphosulfate + ATP = 3'-phosphoadenylyl sulfate + ADP + H(+). It participates in sulfur metabolism; hydrogen sulfide biosynthesis; sulfite from sulfate: step 2/3. Catalyzes the synthesis of activated sulfate. This Klebsiella pneumoniae (strain 342) protein is Adenylyl-sulfate kinase.